The primary structure comprises 360 residues: Alpha-2-HS-glycoprotein (360 aa).

An N-terminal signal peptide occupies residues 1–15; sequence LVLLLSLAQLWSCHL. The Cystatin fetuin-A-type 1 domain occupies 24 to 130; the sequence is YREHNCDDPE…QFTVLSAKCD (107 aa). 6 disulfides stabilise this stretch: Cys-29–Cys-351, Cys-86–Cys-97, Cys-111–Cys-129, Cys-143–Cys-146, Cys-205–Cys-216, and Cys-227–Cys-244. A glycan (N-linked (GlcNAc...) asparagine) is linked at Asn-96. Phosphoserine is present on Ser-131. Thr-132 bears the Phosphothreonine mark. Phosphoserine is present on Ser-135. A Cystatin fetuin-A-type 2 domain is found at 141 to 252; that stretch reads KLCPDCPLLT…TCTIFPAQPV (112 aa). Asn-153 is a glycosylation site (N-linked (GlcNAc...) asparagine). The segment at 260–285 is disordered; sequence VAGAAAVEPAPAVDPASPVSPPDGQS. Thr-312 carries the post-translational modification Phosphothreonine. Residues Ser-318, Ser-321, and Ser-323 each carry the phosphoserine modification.

This sequence belongs to the fetuin family. Post-translationally, phosphorylated by FAM20C in the extracellular medium. As to expression, bone marrow.

The protein localises to the secreted. Functionally, a cell adhesion protein that binds immature cells of the granulocyte lineage. The polypeptide is Alpha-2-HS-glycoprotein (AHSG) (Oryctolagus cuniculus (Rabbit)).